The sequence spans 393 residues: Cytochrome b (393 aa).

Helical transmembrane passes span 32-52 (FGSL…FLAM), 76-98 (WLIR…LHIG), 113-133 (LWSI…LGYV), and 179-199 (FFSL…MHLL). His82 and His96 together coordinate heme b. Heme b is bound by residues His183 and His197. His202 provides a ligand contact to a ubiquinone. The next 4 membrane-spanning stretches (helical) occupy residues 225-245 (FTFK…LFVF), 289-309 (LIGV…PILD), 321-341 (LMRF…FIGS), and 348-368 (YVEI…VVVP).

Belongs to the cytochrome b family. In terms of assembly, fungal cytochrome b-c1 complex contains 10 subunits; 3 respiratory subunits, 2 core proteins and 5 low-molecular weight proteins. Cytochrome b-c1 complex is a homodimer. It depends on heme b as a cofactor.

It is found in the mitochondrion inner membrane. In terms of biological role, component of the ubiquinol-cytochrome c reductase complex (complex III or cytochrome b-c1 complex) that is part of the mitochondrial respiratory chain. The b-c1 complex mediates electron transfer from ubiquinol to cytochrome c. Contributes to the generation of a proton gradient across the mitochondrial membrane that is then used for ATP synthesis. This is Cytochrome b (COB) from Mycosarcoma maydis (Corn smut fungus).